We begin with the raw amino-acid sequence, 320 residues long: ATP-dependent 6-phosphofructokinase isozyme 1 (320 aa).

Residue Gly-12 participates in ATP binding. Residues 22 to 26 (RGVVR) and 55 to 60 (RYSVSD) each bind ADP. ATP contacts are provided by residues 73–74 (RF) and 103–106 (GDGS). Asp-104 serves as a coordination point for Mg(2+). 126-128 (TID) serves as a coordination point for substrate. The active-site Proton acceptor is Asp-128. Arg-155 contacts ADP. Substrate contacts are provided by residues Arg-163 and 170-172 (MGR). Residues 186–188 (GCE), Lys-212, and 214–216 (KKH) contribute to the ADP site. Substrate contacts are provided by residues Glu-223, Arg-244, and 250-253 (HIQR).

Belongs to the phosphofructokinase type A (PFKA) family. ATP-dependent PFK group I subfamily. Prokaryotic clade 'B1' sub-subfamily. In terms of assembly, homotetramer. Mg(2+) is required as a cofactor.

The protein resides in the cytoplasm. The enzyme catalyses beta-D-fructose 6-phosphate + ATP = beta-D-fructose 1,6-bisphosphate + ADP + H(+). It participates in carbohydrate degradation; glycolysis; D-glyceraldehyde 3-phosphate and glycerone phosphate from D-glucose: step 3/4. Allosterically activated by ADP and other diphosphonucleosides, and allosterically inhibited by phosphoenolpyruvate. Functionally, catalyzes the phosphorylation of D-fructose 6-phosphate to fructose 1,6-bisphosphate by ATP, the first committing step of glycolysis. This chain is ATP-dependent 6-phosphofructokinase isozyme 1, found in Shigella boydii serotype 18 (strain CDC 3083-94 / BS512).